An 85-amino-acid polypeptide reads, in one-letter code: Small ribosomal subunit protein bS18 (85 aa).

A compositionally biased stretch (gly residues) spans 1–12 (MAFAQAGGGGGQ). The interval 1 to 22 (MAFAQAGGGGGQRRPFFRRRKT) is disordered.

It belongs to the bacterial ribosomal protein bS18 family. Part of the 30S ribosomal subunit. Forms a tight heterodimer with protein bS6.

Functionally, binds as a heterodimer with protein bS6 to the central domain of the 16S rRNA, where it helps stabilize the platform of the 30S subunit. This Azorhizobium caulinodans (strain ATCC 43989 / DSM 5975 / JCM 20966 / LMG 6465 / NBRC 14845 / NCIMB 13405 / ORS 571) protein is Small ribosomal subunit protein bS18.